The primary structure comprises 118 residues: Vitelline membrane protein Vm32E (118 aa).

Positions 1–17 are cleaved as a signal peptide; the sequence is MKIVALTLVAFVALAGA. A VM domain is found at 36–75; the sequence is GYPAPPCPTNYLFSCQPNLAPAPCAQEAQAPAYGSAGAYT.

It belongs to the vitelline membrane family.

The protein resides in the secreted. Major early eggshell protein. The sequence is that of Vitelline membrane protein Vm32E from Drosophila mauritiana (Fruit fly).